A 183-amino-acid polypeptide reads, in one-letter code: Adenine phosphoribosyltransferase (183 aa).

It belongs to the purine/pyrimidine phosphoribosyltransferase family. As to quaternary structure, homodimer.

The protein localises to the cytoplasm. It catalyses the reaction AMP + diphosphate = 5-phospho-alpha-D-ribose 1-diphosphate + adenine. The protein operates within purine metabolism; AMP biosynthesis via salvage pathway; AMP from adenine: step 1/1. In terms of biological role, catalyzes a salvage reaction resulting in the formation of AMP, that is energically less costly than de novo synthesis. The protein is Adenine phosphoribosyltransferase of Blochmanniella floridana.